We begin with the raw amino-acid sequence, 261 residues long: 3-methyl-2-oxobutanoate hydroxymethyltransferase (261 aa).

Mg(2+) contacts are provided by D42 and D81. Residues 42–43, D81, and K110 each bind 3-methyl-2-oxobutanoate; that span reads DS. E112 is a binding site for Mg(2+). E179 (proton acceptor) is an active-site residue.

This sequence belongs to the PanB family. As to quaternary structure, homodecamer; pentamer of dimers. The cofactor is Mg(2+).

It is found in the cytoplasm. It carries out the reaction 3-methyl-2-oxobutanoate + (6R)-5,10-methylene-5,6,7,8-tetrahydrofolate + H2O = 2-dehydropantoate + (6S)-5,6,7,8-tetrahydrofolate. It functions in the pathway cofactor biosynthesis; coenzyme A biosynthesis. Catalyzes the reversible reaction in which hydroxymethyl group from 5,10-methylenetetrahydrofolate is transferred onto alpha-ketoisovalerate to form ketopantoate. The sequence is that of 3-methyl-2-oxobutanoate hydroxymethyltransferase from Pyrobaculum islandicum (strain DSM 4184 / JCM 9189 / GEO3).